Reading from the N-terminus, the 88-residue chain is Sec-independent protein translocase protein TatA (88 aa).

The chain crosses the membrane as a helical span at residues 1–21 (MGSIGWAQLLIIAVIVVLLFG). The interval 41–88 (KAMGDDSQTPPTNVDKTSNDADFAKSITEKQQPVAKAEESKSHEKEQG) is disordered. A compositionally biased stretch (polar residues) spans 46-56 (DSQTPPTNVDK). Over residues 76-88 (KAEESKSHEKEQG) the composition is skewed to basic and acidic residues.

This sequence belongs to the TatA/E family. In terms of assembly, the Tat system comprises two distinct complexes: a TatABC complex, containing multiple copies of TatA, TatB and TatC subunits, and a separate TatA complex, containing only TatA subunits. Substrates initially bind to the TatABC complex, which probably triggers association of the separate TatA complex to form the active translocon.

Its subcellular location is the cell inner membrane. Functionally, part of the twin-arginine translocation (Tat) system that transports large folded proteins containing a characteristic twin-arginine motif in their signal peptide across membranes. TatA could form the protein-conducting channel of the Tat system. The protein is Sec-independent protein translocase protein TatA of Yersinia pestis.